Here is a 137-residue protein sequence, read N- to C-terminus: Large ribosomal subunit protein uL16 (137 aa).

The protein belongs to the universal ribosomal protein uL16 family. In terms of assembly, part of the 50S ribosomal subunit.

Its function is as follows. Binds 23S rRNA and is also seen to make contacts with the A and possibly P site tRNAs. The polypeptide is Large ribosomal subunit protein uL16 (Aromatoleum aromaticum (strain DSM 19018 / LMG 30748 / EbN1) (Azoarcus sp. (strain EbN1))).